A 329-amino-acid chain; its full sequence is Phosphate acyltransferase (329 aa).

The protein belongs to the PlsX family. As to quaternary structure, homodimer. Probably interacts with PlsY.

It localises to the cytoplasm. The catalysed reaction is a fatty acyl-[ACP] + phosphate = an acyl phosphate + holo-[ACP]. Its pathway is lipid metabolism; phospholipid metabolism. Its function is as follows. Catalyzes the reversible formation of acyl-phosphate (acyl-PO(4)) from acyl-[acyl-carrier-protein] (acyl-ACP). This enzyme utilizes acyl-ACP as fatty acyl donor, but not acyl-CoA. In Anoxybacillus flavithermus (strain DSM 21510 / WK1), this protein is Phosphate acyltransferase.